A 491-amino-acid chain; its full sequence is Cysteine--tRNA ligase (491 aa).

Cys-29 contributes to the Zn(2+) binding site. Positions 31–41 (PTVYDFAHIGN) match the 'HIGH' region motif. The Zn(2+) site is built by Cys-227, His-252, and Glu-256. A 'KMSKS' region motif is present at residues 285–289 (KMSKS). An ATP-binding site is contributed by Lys-288.

The protein belongs to the class-I aminoacyl-tRNA synthetase family. In terms of assembly, monomer. Zn(2+) serves as cofactor.

Its subcellular location is the cytoplasm. It catalyses the reaction tRNA(Cys) + L-cysteine + ATP = L-cysteinyl-tRNA(Cys) + AMP + diphosphate. This chain is Cysteine--tRNA ligase, found in Rhodopseudomonas palustris (strain TIE-1).